The chain runs to 243 residues: uncharacterized protein (243 aa).

4 helical membrane-spanning segments follow: residues 38-58 (AYFLFLLSFFVTAVMFLVGIF), 99-119 (FGIAILALGLFSLFLMIFLGY), 143-163 (FYFSVVAYCFWIALMLLFLVL), and 204-224 (AFATALCITLVVYELPFLGLF).

The protein resides in the cell membrane. This is an uncharacterized protein from Mycoplasma pneumoniae (strain ATCC 29342 / M129 / Subtype 1) (Mycoplasmoides pneumoniae).